The chain runs to 266 residues: ATP synthase subunit a (266 aa).

Transmembrane regions (helical) follow at residues 28 to 48 (SINV…LVIF), 88 to 108 (LIAP…MMDL), 141 to 161 (DVNI…FYSI), 206 to 226 (LFGN…LLPW), and 237 to 257 (AIFH…LTVV).

Belongs to the ATPase A chain family. In terms of assembly, F-type ATPases have 2 components, CF(1) - the catalytic core - and CF(0) - the membrane proton channel. CF(1) has five subunits: alpha(3), beta(3), gamma(1), delta(1), epsilon(1). CF(0) has three main subunits: a(1), b(2) and c(9-12). The alpha and beta chains form an alternating ring which encloses part of the gamma chain. CF(1) is attached to CF(0) by a central stalk formed by the gamma and epsilon chains, while a peripheral stalk is formed by the delta and b chains.

The protein resides in the cell inner membrane. Key component of the proton channel; it plays a direct role in the translocation of protons across the membrane. This Pectobacterium atrosepticum (strain SCRI 1043 / ATCC BAA-672) (Erwinia carotovora subsp. atroseptica) protein is ATP synthase subunit a.